A 375-amino-acid chain; its full sequence is 23S rRNA (uracil(747)-C(5))-methyltransferase RlmC (375 aa).

[4Fe-4S] cluster-binding residues include C3, C11, C14, and C87. Positions 212, 241, 262, and 307 each coordinate S-adenosyl-L-methionine. The active-site Nucleophile is the C334.

This sequence belongs to the class I-like SAM-binding methyltransferase superfamily. RNA M5U methyltransferase family. RlmC subfamily.

It carries out the reaction uridine(747) in 23S rRNA + S-adenosyl-L-methionine = 5-methyluridine(747) in 23S rRNA + S-adenosyl-L-homocysteine + H(+). Functionally, catalyzes the formation of 5-methyl-uridine at position 747 (m5U747) in 23S rRNA. In Escherichia coli O127:H6 (strain E2348/69 / EPEC), this protein is 23S rRNA (uracil(747)-C(5))-methyltransferase RlmC.